We begin with the raw amino-acid sequence, 122 residues long: Histone H2B.1 (122 aa).

The span at 1 to 10 (MAPKKAPAAA) shows a compositional bias: low complexity. Residues 1 to 28 (MAPKKAPAAAAEKKVKKAPTTEKKNKKK) are disordered. N,N,N-trimethylalanine is present on A2. An N6-acetyllysine mark is found at K5 and K42. A Glycyl lysine isopeptide (Lys-Gly) (interchain with G-Cter in ubiquitin) cross-link involves residue K116.

Belongs to the histone H2B family. As to quaternary structure, the nucleosome is a histone octamer containing two molecules each of H2A, H2B, H3 and H4 assembled in one H3-H4 heterotetramer and two H2A-H2B heterodimers. The octamer wraps approximately 147 bp of DNA. In terms of processing, acetylation occurs almost exclusively in the MAC. Monoubiquitination to form H2BK115ub1 gives a specific tag for epigenetic transcriptional activation and is also prerequisite for H3K4me and H3K79me formation.

The protein localises to the nucleus. It localises to the chromosome. Functionally, core component of nucleosome. Nucleosomes wrap and compact DNA into chromatin, limiting DNA accessibility to the cellular machineries which require DNA as a template. Histones thereby play a central role in transcription regulation, DNA repair, DNA replication and chromosomal stability. DNA accessibility is regulated via a complex set of post-translational modifications of histones, also called histone code, and nucleosome remodeling. In Tetrahymena thermophila (strain SB210), this protein is Histone H2B.1 (HTB1).